The sequence spans 86 residues: Exodeoxyribonuclease 7 small subunit (86 aa).

It belongs to the XseB family. As to quaternary structure, heterooligomer composed of large and small subunits.

It localises to the cytoplasm. It catalyses the reaction Exonucleolytic cleavage in either 5'- to 3'- or 3'- to 5'-direction to yield nucleoside 5'-phosphates.. In terms of biological role, bidirectionally degrades single-stranded DNA into large acid-insoluble oligonucleotides, which are then degraded further into small acid-soluble oligonucleotides. The polypeptide is Exodeoxyribonuclease 7 small subunit (Agrobacterium fabrum (strain C58 / ATCC 33970) (Agrobacterium tumefaciens (strain C58))).